Consider the following 751-residue polypeptide: Trehalose phosphorylase (751 aa).

A propeptide spanning residues 1-26 (MSTPHHQFESKSSTAIRRRLSSSVSS) is cleaved from the precursor. The disordered stretch occupies residues 1–28 (MSTPHHQFESKSSTAIRRRLSSSVSSKQ).

Belongs to the glycosyltransferase group 1 family. Glycosyltransferase 4 subfamily. In terms of assembly, homodimer. Expressed in mycelia, stipes and pilei.

It carries out the reaction alpha,alpha-trehalose + phosphate = alpha-D-glucose + alpha-D-glucose 1-phosphate. Functionally, reversibly catalyzes the synthesis and degradation of trehalose from glucose and alpha-D-glucose 1-phosphate. The equilibrium lies in the direction of trehalose synthesis. This chain is Trehalose phosphorylase, found in Pleurotus sajor-caju (Oyster mushroom).